Consider the following 149-residue polypeptide: Large ribosomal subunit protein uL11 (149 aa).

It belongs to the universal ribosomal protein uL11 family. As to quaternary structure, part of the ribosomal stalk of the 50S ribosomal subunit. Interacts with L10 and the large rRNA to form the base of the stalk. L10 forms an elongated spine to which L12 dimers bind in a sequential fashion forming a multimeric L10(L12)X complex. In terms of processing, one or more lysine residues are methylated.

Forms part of the ribosomal stalk which helps the ribosome interact with GTP-bound translation factors. In Methylobacterium sp. (strain 4-46), this protein is Large ribosomal subunit protein uL11.